A 466-amino-acid polypeptide reads, in one-letter code: RUS family member 1 (466 aa).

An N-acetylalanine modification is found at A2. A helical membrane pass occupies residues 245–265 (LLMLPLVSDCPSLSLGCFVLL).

Belongs to the RUS1 family.

It is found in the membrane. In Mus musculus (Mouse), this protein is RUS family member 1.